The chain runs to 89 residues: Large ribosomal subunit protein bL27 (89 aa).

A disordered region spans residues 1–21; sequence MAHKKAGGSSRNGRDSQSKRL.

The protein belongs to the bacterial ribosomal protein bL27 family.

This is Large ribosomal subunit protein bL27 from Rhizobium leguminosarum bv. trifolii (strain WSM2304).